Consider the following 130-residue polypeptide: Small ribosomal subunit protein uS8 (130 aa).

This sequence belongs to the universal ribosomal protein uS8 family. Part of the 30S ribosomal subunit.

In terms of biological role, one of the primary rRNA binding proteins, it binds directly to 16S rRNA central domain where it helps coordinate assembly of the platform of the 30S subunit. The sequence is that of Small ribosomal subunit protein uS8 from Methanopyrus kandleri (strain AV19 / DSM 6324 / JCM 9639 / NBRC 100938).